The sequence spans 126 residues: UPF0344 protein ABC2900 (126 aa).

A run of 4 helical transmembrane segments spans residues 16–36 (ASHE…YFLF), 43–63 (AGTI…VTGA), 66–86 (LIAY…VLLI), and 104–124 (GMLF…YGII).

This sequence belongs to the UPF0344 family.

Its subcellular location is the cell membrane. This chain is UPF0344 protein ABC2900, found in Shouchella clausii (strain KSM-K16) (Alkalihalobacillus clausii).